The chain runs to 273 residues: Proteasome subunit beta type-10 (273 aa).

Met-1 is modified (N-acetylmethionine). Residues 1-39 constitute a propeptide, removed in mature form; that stretch reads MLKQAVEHRGGFSFENCQRNASLEHVLPGLRVPLARKTG. Thr-40 (nucleophile) is an active-site residue. Ser-230 carries the phosphoserine modification.

The protein belongs to the peptidase T1B family. As to quaternary structure, the 26S proteasome consists of a 20S proteasome core and two 19S regulatory subunits. The 20S proteasome core is composed of 28 subunits that are arranged in four stacked rings, resulting in a barrel-shaped structure. The two end rings are each formed by seven alpha subunits, and the two central rings are each formed by seven beta subunits. The catalytic chamber with the active sites is on the inside of the barrel. Component of the immunoproteasome, where it displaces the equivalent housekeeping subunit PSMB7. Component of the spermatoproteasome, a form of the proteasome specifically found in testis. Autocleaved. The resulting N-terminal Thr residue of the mature subunit is responsible for the nucleophile proteolytic activity.

It localises to the cytoplasm. The protein localises to the nucleus. The enzyme catalyses Cleavage of peptide bonds with very broad specificity.. Functionally, the proteasome is a multicatalytic proteinase complex which is characterized by its ability to cleave peptides with Arg, Phe, Tyr, Leu, and Glu adjacent to the leaving group at neutral or slightly basic pH. The proteasome has an ATP-dependent proteolytic activity. This subunit is involved in antigen processing to generate class I binding peptides. In Rattus norvegicus (Rat), this protein is Proteasome subunit beta type-10 (Psmb10).